The primary structure comprises 325 residues: Reticulocalbin-1 (325 aa).

Residues 1–23 form the signal peptide; that stretch reads MARGGRLGLALGLLLALVLALRA. An N-linked (GlcNAc...) asparagine; partial glycan is attached at Asn-47. Ser-49 and Ser-74 each carry phosphoserine. EF-hand domains are found at residues 73–108, 109–144, 160–195, 197–232, 238–273, and 274–309; these read ESKE…VQKR, YIYD…YYLG, KMLP…EEFE, MKEI…HEDN, WVLS…QDYD, and HAQA…FVGS. Ca(2+)-binding residues include Asp-86, Asp-88, Asp-90, Glu-97, Asp-122, Asp-124, Asp-126, Lys-128, Glu-133, Asp-173, Asp-175, Asp-177, Thr-179, Glu-184, Asp-210, Asn-212, Asp-214, Glu-221, Asp-251, Asn-253, Asp-255, Lys-257, Glu-262, Asp-287, Asn-289, Asp-291, Met-293, and Glu-298. A Prevents secretion from ER motif is present at residues 322–325; it reads HDEL.

Belongs to the CREC family. Post-translationally, O-glycosylated. O-mannosylated by POMT1 and POMT2 and elongated by POMGNT1.

It is found in the endoplasmic reticulum lumen. May regulate calcium-dependent activities in the endoplasmic reticulum lumen or post-ER compartment. This chain is Reticulocalbin-1 (Rcn1), found in Mus musculus (Mouse).